We begin with the raw amino-acid sequence, 1133 residues long: Early transcription factor large subunit homolog (1133 aa).

In terms of domain architecture, Helicase ATP-binding spans 52–352 (KGGRAFFPCD…PNGQPLQRQQ (301 aa)). 99–106 (WQTGTGKS) serves as a coordination point for ATP. The DEAH box motif lies at 281-284 (DEIH). One can recognise a Helicase C-terminal domain in the interval 524 to 724 (MMKDILSIIR…EGDKALRKHA (201 aa)).

It belongs to the DEAD box helicase family. DEAH subfamily.

The protein resides in the virion. The enzyme catalyses ATP + H2O = ADP + phosphate + H(+). Putative initation factor. The polypeptide is Early transcription factor large subunit homolog (African swine fever virus (isolate Tick/South Africa/Pretoriuskop Pr4/1996) (ASFV)).